Here is a 554-residue protein sequence, read N- to C-terminus: Valerianol synthase TPS1E (554 aa).

Residues Asp307 and Asp311 each coordinate Mg(2+). The short motif at 326–330 (VQRWD) is the DDXXD motif element. Positions 452, 456, and 460 each coordinate Mg(2+).

This sequence belongs to the terpene synthase family. It depends on Mg(2+) as a cofactor.

The catalysed reaction is (2E,6E)-farnesyl diphosphate + H2O = valerianol + diphosphate. The protein operates within secondary metabolite biosynthesis; terpenoid biosynthesis. Its function is as follows. Terpene synthase that catalyzes the biosynthesis of the terpene valerianol, which is a volatile compound of floral scent. The polypeptide is Valerianol synthase TPS1E (Camellia hiemalis (Camellia)).